The following is a 561-amino-acid chain: Long-chain-fatty-acid--CoA ligase (561 aa).

An ATP-binding site is contributed by 213-224; that stretch reads YTGGTTGVAKGA.

The protein belongs to the ATP-dependent AMP-binding enzyme family. Mg(2+) is required as a cofactor.

Its subcellular location is the membrane. The catalysed reaction is a long-chain fatty acid + ATP + CoA = a long-chain fatty acyl-CoA + AMP + diphosphate. It participates in lipid metabolism; fatty acid beta-oxidation. Functionally, catalyzes the esterification, concomitant with transport, of exogenous long-chain fatty acids into metabolically active CoA thioesters for subsequent degradation or incorporation into phospholipids. The polypeptide is Long-chain-fatty-acid--CoA ligase (fadD) (Escherichia coli O6:H1 (strain CFT073 / ATCC 700928 / UPEC)).